A 228-amino-acid polypeptide reads, in one-letter code: Uridylate kinase (228 aa).

9–10 (GS) contacts ATP. Glycine 44 contacts UMP. 2 residues coordinate ATP: glycine 45 and arginine 49. UMP contacts are provided by residues aspartate 66 and 114-120 (IVAAQTT). Threonine 140, tyrosine 146, and aspartate 149 together coordinate ATP.

It belongs to the UMP kinase family. In terms of assembly, homohexamer.

It is found in the cytoplasm. The enzyme catalyses UMP + ATP = UDP + ADP. It functions in the pathway pyrimidine metabolism; CTP biosynthesis via de novo pathway; UDP from UMP (UMPK route): step 1/1. With respect to regulation, inhibited by UTP. Functionally, catalyzes the reversible phosphorylation of UMP to UDP. This chain is Uridylate kinase, found in Haloarcula marismortui (strain ATCC 43049 / DSM 3752 / JCM 8966 / VKM B-1809) (Halobacterium marismortui).